Reading from the N-terminus, the 67-residue chain is Large ribosomal subunit protein uL29 (67 aa).

This sequence belongs to the universal ribosomal protein uL29 family.

The polypeptide is Large ribosomal subunit protein uL29 (Halorhodospira halophila (strain DSM 244 / SL1) (Ectothiorhodospira halophila (strain DSM 244 / SL1))).